The following is a 247-amino-acid chain: Proteasome subunit alpha (247 aa).

Belongs to the peptidase T1A family. As to quaternary structure, the 20S proteasome core is composed of 14 alpha and 14 beta subunits that assemble into four stacked heptameric rings, resulting in a barrel-shaped structure. The two inner rings, each composed of seven catalytic beta subunits, are sandwiched by two outer rings, each composed of seven alpha subunits. The catalytic chamber with the active sites is on the inside of the barrel. Has a gated structure, the ends of the cylinder being occluded by the N-termini of the alpha-subunits. Is capped at one or both ends by the proteasome regulatory ATPase, PAN.

The protein resides in the cytoplasm. With respect to regulation, the formation of the proteasomal ATPase PAN-20S proteasome complex, via the docking of the C-termini of PAN into the intersubunit pockets in the alpha-rings, triggers opening of the gate for substrate entry. Interconversion between the open-gate and close-gate conformations leads to a dynamic regulation of the 20S proteasome proteolysis activity. In terms of biological role, component of the proteasome core, a large protease complex with broad specificity involved in protein degradation. In Methanosarcina thermophila, this protein is Proteasome subunit alpha.